We begin with the raw amino-acid sequence, 291 residues long: ATP synthase subunit a (291 aa).

6 helical membrane passes run 51–71, 117–137, 146–166, 173–193, 213–233, and 239–259; these read FSFT…LLLV, FFPC…QGMI, HFLI…IVGF, FLSF…LVLL, MMAG…MLCM, and FIGD…ELGV.

It belongs to the ATPase A chain family. In terms of assembly, F-type ATPases have 2 components, CF(1) - the catalytic core - and CF(0) - the membrane proton channel. CF(1) has five subunits: alpha(3), beta(3), gamma(1), delta(1), epsilon(1). CF(0) has three main subunits: a, b and c.

Its subcellular location is the mitochondrion inner membrane. In terms of biological role, mitochondrial membrane ATP synthase (F(1)F(0) ATP synthase or Complex V) produces ATP from ADP in the presence of a proton gradient across the membrane which is generated by electron transport complexes of the respiratory chain. F-type ATPases consist of two structural domains, F(1) - containing the extramembraneous catalytic core and F(0) - containing the membrane proton channel, linked together by a central stalk and a peripheral stalk. During catalysis, ATP synthesis in the catalytic domain of F(1) is coupled via a rotary mechanism of the central stalk subunits to proton translocation. Key component of the proton channel; it may play a direct role in the translocation of protons across the membrane. In Vicia faba (Broad bean), this protein is ATP synthase subunit a (ATP6).